A 436-amino-acid chain; its full sequence is Trigger factor (436 aa).

One can recognise a PPIase FKBP-type domain in the interval 163 to 248 (GDRATIDFEG…VKKIEAAHLP (86 aa)).

This sequence belongs to the FKBP-type PPIase family. Tig subfamily.

The protein localises to the cytoplasm. It catalyses the reaction [protein]-peptidylproline (omega=180) = [protein]-peptidylproline (omega=0). Functionally, involved in protein export. Acts as a chaperone by maintaining the newly synthesized protein in an open conformation. Functions as a peptidyl-prolyl cis-trans isomerase. This chain is Trigger factor, found in Polaromonas sp. (strain JS666 / ATCC BAA-500).